An 81-amino-acid polypeptide reads, in one-letter code: Putative phytosulfokines 6 (81 aa).

Residues 1-20 (MKQSLCLAVLFLILSTSSSA) form the signal peptide. Positions 21–72 (IRRGKEDQEINPLVSATSVEEDSVNKLMGMEYCGEGDEECLRRRMMTESHLD) are excised as a propeptide. Y73 and Y75 each carry sulfotyrosine. The propeptide occupies 78 to 81 (HHKH).

It belongs to the phytosulfokine family. Post-translationally, sulfation is important for activity and for the binding to a putative membrane receptor. PSK-beta is an enzymatic derivative of PSK-alpha. As to expression, expressed in roots, leaves, stems, flowers and siliques. Most abundant in vascular bundles and in root tips.

Its subcellular location is the secreted. Its function is as follows. Promotes plant cell differentiation, organogenesis and somatic embryogenesis as well as cell proliferation. The chain is Putative phytosulfokines 6 (PSK6) from Arabidopsis thaliana (Mouse-ear cress).